Reading from the N-terminus, the 273-residue chain is Glutamate 5-kinase (273 aa).

Lys-15 is an ATP binding site. The substrate site is built by Ser-55, Asp-142, and Asn-158. Residues 178-179 (SD) and 220-226 (TGGMLSK) each bind ATP.

The protein belongs to the glutamate 5-kinase family.

It localises to the cytoplasm. It carries out the reaction L-glutamate + ATP = L-glutamyl 5-phosphate + ADP. It functions in the pathway amino-acid biosynthesis; L-proline biosynthesis; L-glutamate 5-semialdehyde from L-glutamate: step 1/2. Catalyzes the transfer of a phosphate group to glutamate to form L-glutamate 5-phosphate. The chain is Glutamate 5-kinase from Streptococcus pyogenes serotype M1.